Consider the following 178-residue polypeptide: Probable major fimbrial subunit LpfA (178 aa).

Positions 1–24 are cleaved as a signal peptide; that stretch reads MEFFMKKVVFALTALALTSGTVFA.

This sequence belongs to the fimbrial protein family.

It is found in the fimbrium. Its function is as follows. Part of the lpfABCC'DE fimbrial operon. LP fimbriae may participate in the interaction with eukaryotic cells by assisting in microcolony formation. The chain is Probable major fimbrial subunit LpfA (lpfA) from Escherichia coli O157:H7.